Here is a 469-residue protein sequence, read N- to C-terminus: Glutamate--tRNA ligase (469 aa).

The short motif at P9–G19 is the 'HIGH' region element. Zn(2+) contacts are provided by C98, C100, C125, and D127. The short motif at K236–R240 is the 'KMSKS' region element. ATP is bound at residue K239.

This sequence belongs to the class-I aminoacyl-tRNA synthetase family. Glutamate--tRNA ligase type 1 subfamily. As to quaternary structure, monomer. Requires Zn(2+) as cofactor.

Its subcellular location is the cytoplasm. It carries out the reaction tRNA(Glu) + L-glutamate + ATP = L-glutamyl-tRNA(Glu) + AMP + diphosphate. Its function is as follows. Catalyzes the attachment of glutamate to tRNA(Glu) in a two-step reaction: glutamate is first activated by ATP to form Glu-AMP and then transferred to the acceptor end of tRNA(Glu). The polypeptide is Glutamate--tRNA ligase (Shewanella putrefaciens (strain CN-32 / ATCC BAA-453)).